Here is a 373-residue protein sequence, read N- to C-terminus: Anhydro-N-acetylmuramic acid kinase (373 aa).

Residue 12-19 participates in ATP binding; it reads GTSLDGVD.

This sequence belongs to the anhydro-N-acetylmuramic acid kinase family.

The enzyme catalyses 1,6-anhydro-N-acetyl-beta-muramate + ATP + H2O = N-acetyl-D-muramate 6-phosphate + ADP + H(+). The protein operates within amino-sugar metabolism; 1,6-anhydro-N-acetylmuramate degradation. It functions in the pathway cell wall biogenesis; peptidoglycan recycling. Functionally, catalyzes the specific phosphorylation of 1,6-anhydro-N-acetylmuramic acid (anhMurNAc) with the simultaneous cleavage of the 1,6-anhydro ring, generating MurNAc-6-P. Is required for the utilization of anhMurNAc either imported from the medium or derived from its own cell wall murein, and thus plays a role in cell wall recycling. The chain is Anhydro-N-acetylmuramic acid kinase from Erwinia tasmaniensis (strain DSM 17950 / CFBP 7177 / CIP 109463 / NCPPB 4357 / Et1/99).